The primary structure comprises 327 residues: Aspartate carbamoyltransferase catalytic subunit (327 aa).

Arg-67 and Thr-68 together coordinate carbamoyl phosphate. Lys-95 is an L-aspartate binding site. Positions 117, 145, and 148 each coordinate carbamoyl phosphate. The L-aspartate site is built by Arg-178 and Arg-232. Carbamoyl phosphate is bound by residues Gly-273 and Pro-274.

It belongs to the aspartate/ornithine carbamoyltransferase superfamily. ATCase family. Heterododecamer (2C3:3R2) of six catalytic PyrB chains organized as two trimers (C3), and six regulatory PyrI chains organized as three dimers (R2).

It catalyses the reaction carbamoyl phosphate + L-aspartate = N-carbamoyl-L-aspartate + phosphate + H(+). Its pathway is pyrimidine metabolism; UMP biosynthesis via de novo pathway; (S)-dihydroorotate from bicarbonate: step 2/3. Functionally, catalyzes the condensation of carbamoyl phosphate and aspartate to form carbamoyl aspartate and inorganic phosphate, the committed step in the de novo pyrimidine nucleotide biosynthesis pathway. This is Aspartate carbamoyltransferase catalytic subunit from Parvibaculum lavamentivorans (strain DS-1 / DSM 13023 / NCIMB 13966).